We begin with the raw amino-acid sequence, 251 residues long: HTH-type transcriptional regulator UlaR (251 aa).

One can recognise an HTH deoR-type domain in the interval 3-58 (EAQRHQILLEMLAQLGFVTVEKVVERLGISPATARRDINKLGESGKLKKVRNGAEA). The segment at residues 20-39 (VTVEKVVERLGISPATARRD) is a DNA-binding region (H-T-H motif).

Its subcellular location is the cytoplasm. In terms of biological role, represses ulaG and the ulaABCDEF operon. The sequence is that of HTH-type transcriptional regulator UlaR from Shigella flexneri.